The chain runs to 561 residues: Cytochrome P450 monooxygenase avaL (561 aa).

A helical membrane pass occupies residues 19-39; the sequence is IAASCALVCIVSACYVVWSLL. Position 508 (cysteine 508) interacts with heme.

This sequence belongs to the cytochrome P450 family. Heme serves as cofactor.

It localises to the membrane. It participates in secondary metabolite biosynthesis. Functionally, cytochrome P450 monooxygenase; part of the cluster that mediates the biosynthesis of a highly modified cyclo-arginine-tryptophan dipeptide (cRW). The first step of the pathway is perfornmed by the arginine-containing cyclodipeptide synthase (RCPDS) avaA that acts as the scaffold-generating enzyme and is responsible for formation of the cyclo-Arg-Trp (cRW) diketopiperazine. AvaB then acts as a multifunctional flavoenzyme that is responsible for generating the cyclo-Arg-formylkynurenine DKP, which can be deformylated by avaC. AvaB then further catalyzes an additional N-oxidation followed by cyclization and dehydration. The next step is an N-acetylation of the guanidine group catalyzed by the arginine N-acetyltransferase avaD. The roles of the additional enzymes identified within the ava cluster still have to be determined. In Aspergillus versicolor, this protein is Cytochrome P450 monooxygenase avaL.